We begin with the raw amino-acid sequence, 130 residues long: Small ribosomal subunit protein uS9 (130 aa).

Belongs to the universal ribosomal protein uS9 family.

The sequence is that of Small ribosomal subunit protein uS9 from Xanthomonas campestris pv. campestris (strain 8004).